Reading from the N-terminus, the 277-residue chain is Probable septum site-determining protein MinC (277 aa).

The interval 137–164 is disordered; it reads ATTGNAPAEPAPAEPAAPAAAPQPPAVP. Residues 145–164 show a composition bias toward pro residues; the sequence is EPAPAEPAAPAAAPQPPAVP.

This sequence belongs to the MinC family. Interacts with MinD and FtsZ.

Cell division inhibitor that blocks the formation of polar Z ring septums. Rapidly oscillates between the poles of the cell to destabilize FtsZ filaments that have formed before they mature into polar Z rings. Prevents FtsZ polymerization. This is Probable septum site-determining protein MinC from Bordetella petrii (strain ATCC BAA-461 / DSM 12804 / CCUG 43448).